A 354-amino-acid chain; its full sequence is S-adenosylmethionine:tRNA ribosyltransferase-isomerase (354 aa).

It belongs to the QueA family. Monomer.

It localises to the cytoplasm. The enzyme catalyses 7-aminomethyl-7-carbaguanosine(34) in tRNA + S-adenosyl-L-methionine = epoxyqueuosine(34) in tRNA + adenine + L-methionine + 2 H(+). Its pathway is tRNA modification; tRNA-queuosine biosynthesis. In terms of biological role, transfers and isomerizes the ribose moiety from AdoMet to the 7-aminomethyl group of 7-deazaguanine (preQ1-tRNA) to give epoxyqueuosine (oQ-tRNA). The protein is S-adenosylmethionine:tRNA ribosyltransferase-isomerase of Azorhizobium caulinodans (strain ATCC 43989 / DSM 5975 / JCM 20966 / LMG 6465 / NBRC 14845 / NCIMB 13405 / ORS 571).